A 151-amino-acid polypeptide reads, in one-letter code: Endoribonuclease YbeY (151 aa).

The Zn(2+) site is built by His108, His112, and Asp118.

It belongs to the endoribonuclease YbeY family. Zn(2+) serves as cofactor.

The protein resides in the cytoplasm. In terms of biological role, single strand-specific metallo-endoribonuclease involved in late-stage 70S ribosome quality control and in maturation of the 3' terminus of the 16S rRNA. The protein is Endoribonuclease YbeY of Porphyromonas gingivalis (strain ATCC BAA-308 / W83).